A 508-amino-acid polypeptide reads, in one-letter code: MVTLDGSSLTTADVARVLFDFEEAAASEESMERVKKSRAAVERIVRDEKTIYGINTGFGKFSDVLIQKEDSAALQLNLILSHACGVGDPFPECVSRAMLLLRANALLKGFSGVRAELIEQLLAFLNKRVHPVIPQQGSLGASGDLAPLSHLALALIGQGEVFFEGERMPAMTGLKKAGIQPVTLTSKEGLALINGTQAMTAMGVVAYIEAEKLAYQTERIASLTIEGLQGIIDAFDEDIHLARGYQEQIDVAERIRFYLSDSGLTTSQGELRVQDAYSLRCIPQVHGATWQTLGYVKEKLEIEMNAATDNPLIFNDGDKVISGGNFHGQPIAFAMDFLKIAISELANIAERRIERLVNPQLNDLPPFLSPHPGLQSGAMIMQYAAASLVSENKTLAHPASVDSIPSSANQEDHVSMGTIAARHAYQVIANTRRVIAIEAICALQAVEYRGIEHAASYTKQLFQEMRKVVPSIQQDRVFSYDIERLTDWLKKESLIPDHQNKELRGMNI.

The segment at residues 141–143 (ASG) is a cross-link (5-imidazolinone (Ala-Gly)). 2,3-didehydroalanine (Ser) is present on serine 142.

The protein belongs to the PAL/histidase family. Contains an active site 4-methylidene-imidazol-5-one (MIO), which is formed autocatalytically by cyclization and dehydration of residues Ala-Ser-Gly.

The protein localises to the cytoplasm. The enzyme catalyses L-histidine = trans-urocanate + NH4(+). It participates in amino-acid degradation; L-histidine degradation into L-glutamate; N-formimidoyl-L-glutamate from L-histidine: step 1/3. The protein is Histidine ammonia-lyase (hutH) of Bacillus subtilis (strain 168).